A 540-amino-acid polypeptide reads, in one-letter code: Cytochrome P450 27C1 (540 aa).

Residue C486 participates in heme binding.

It belongs to the cytochrome P450 family. The cofactor is heme. As to expression, following L-thyroxine, expressed in the retinal pigment epithelium (at protein level).

The protein resides in the membrane. The catalysed reaction is all-trans-retinol + 2 reduced [adrenodoxin] + O2 + 2 H(+) = all-trans-3,4-didehydroretinol + 2 oxidized [adrenodoxin] + 2 H2O. In terms of biological role, efficiently catalyzes the conversion of all-trans retinol (also called vitamin A1, the precursor of 11-cis retinal) to 3,4-didehydroretinol (also called vitamin A2, the precursor of 11-cis 3,4-didehydroretinal). Also acts on all-trans retinal and all-trans retinoic acid. The replacement of 11-cis retinal chromophore in photopigments with 11-cis 3,4-didehydroretinal enhances sensitivity to long-wavelength light. This may improve vision in fresh water which is often turbid. The sequence is that of Cytochrome P450 27C1 (cyp27c1) from Danio rerio (Zebrafish).